Here is a 229-residue protein sequence, read N- to C-terminus: 7-cyano-7-deazaguanine synthase (229 aa).

Residue 15–25 (LSGGLDSATVV) coordinates ATP. Zn(2+) is bound by residues Cys194, Cys204, Cys207, and Cys210.

This sequence belongs to the QueC family. Requires Zn(2+) as cofactor.

The catalysed reaction is 7-carboxy-7-deazaguanine + NH4(+) + ATP = 7-cyano-7-deazaguanine + ADP + phosphate + H2O + H(+). Its pathway is purine metabolism; 7-cyano-7-deazaguanine biosynthesis. Catalyzes the ATP-dependent conversion of 7-carboxy-7-deazaguanine (CDG) to 7-cyano-7-deazaguanine (preQ(0)). The sequence is that of 7-cyano-7-deazaguanine synthase from Pseudomonas savastanoi pv. phaseolicola (strain 1448A / Race 6) (Pseudomonas syringae pv. phaseolicola (strain 1448A / Race 6)).